A 486-amino-acid polypeptide reads, in one-letter code: MNADAKTEIKGRERYKAGVLKYAQMGYWNGDYEPKDTDLIALFRITPQDGVDPIEAAAAVAGESSTATWTVVWTDRLTACDQYRAKAYRVDPVPGTPGQYFCYVAYDLILFEEGSIANLTASIIGNVFSFKPLKAARLEDMRLPVAYVKTFRGPPTGIVVERERLDKFGKPLLGATTKPKLGLSGKNYGRVVYEGLKGGLDFMKDDENINSQPFMHWRDRYLYCMEAVNHASAVTGEVKGHYLNITAGTMEEMYRRAEFAKELGSVIVMVDLIVGWTAIQSISEWCRQNDMILHMHRAGHGTYTRQKNHGISFRVIAKWLRLAGVDHLHAGTAVGKLEGDPPTVQGYYNVCREMKNEVDLPRGLFFEQDWADLKKVMPVASGGIHAGQMHQLLDLFGDDVVLQFGGGTIGHPMGIQAGATANRVALEAMVLARNEGRDIAHEGPEILRAAAKWCKPLEAALDIWGNISFNYTPTDTSDFVPSVTAA.

Residues Asn126 and Thr176 each contribute to the substrate site. Lys178 acts as the Proton acceptor in catalysis. Lys180 provides a ligand contact to substrate. Lys204, Asp206, and Glu207 together coordinate Mg(2+). Lys204 carries the post-translational modification N6-carboxylysine. His296 (proton acceptor) is an active-site residue. Substrate is bound by residues Arg297, His329, and Ser381.

Belongs to the RuBisCO large chain family. Type I subfamily. In terms of assembly, heterohexadecamer of 8 large chains and 8 small chains. The cofactor is Mg(2+).

It catalyses the reaction 2 (2R)-3-phosphoglycerate + 2 H(+) = D-ribulose 1,5-bisphosphate + CO2 + H2O. The catalysed reaction is D-ribulose 1,5-bisphosphate + O2 = 2-phosphoglycolate + (2R)-3-phosphoglycerate + 2 H(+). RuBisCO catalyzes two reactions: the carboxylation of D-ribulose 1,5-bisphosphate, the primary event in carbon dioxide fixation, as well as the oxidative fragmentation of the pentose substrate. Both reactions occur simultaneously and in competition at the same active site. This chain is Ribulose bisphosphate carboxylase large chain, found in Rhizobium meliloti (strain 1021) (Ensifer meliloti).